The primary structure comprises 165 residues: Basic transcription factor 3 (165 aa).

One can recognise an NAC-A/B domain in the interval 33-97 (TTDDKRLQST…PQTKKLQDIL (65 aa)). A compositionally biased stretch (polar residues) spans 120 to 134 (QKQASGEGNAASATI). Residues 120-144 (QKQASGEGNAASATIQEEDDDDVPE) are disordered.

This sequence belongs to the NAC-beta family. In terms of assembly, part of the nascent polypeptide-associated complex (NAC). Interacts with EIF(ISO)4E.

The polypeptide is Basic transcription factor 3 (Arabidopsis thaliana (Mouse-ear cress)).